Consider the following 238-residue polypeptide: Pyridoxine 5'-phosphate synthase (238 aa).

Asn9 is a 3-amino-2-oxopropyl phosphate binding site. 1-deoxy-D-xylulose 5-phosphate is bound at residue 11-12 (DH). Residue Arg20 coordinates 3-amino-2-oxopropyl phosphate. The active-site Proton acceptor is His45. 1-deoxy-D-xylulose 5-phosphate contacts are provided by Arg47 and His52. The Proton acceptor role is filled by Glu72. 1-deoxy-D-xylulose 5-phosphate is bound at residue Thr102. Residue His189 is the Proton donor of the active site. Residues Gly190 and 211–212 (GH) contribute to the 3-amino-2-oxopropyl phosphate site.

The protein belongs to the PNP synthase family. As to quaternary structure, homooctamer; tetramer of dimers.

The protein localises to the cytoplasm. The enzyme catalyses 3-amino-2-oxopropyl phosphate + 1-deoxy-D-xylulose 5-phosphate = pyridoxine 5'-phosphate + phosphate + 2 H2O + H(+). The protein operates within cofactor biosynthesis; pyridoxine 5'-phosphate biosynthesis; pyridoxine 5'-phosphate from D-erythrose 4-phosphate: step 5/5. Its function is as follows. Catalyzes the complicated ring closure reaction between the two acyclic compounds 1-deoxy-D-xylulose-5-phosphate (DXP) and 3-amino-2-oxopropyl phosphate (1-amino-acetone-3-phosphate or AAP) to form pyridoxine 5'-phosphate (PNP) and inorganic phosphate. The protein is Pyridoxine 5'-phosphate synthase of Ehrlichia canis (strain Jake).